The sequence spans 116 residues: Putative UPF0320 protein YLL065W (116 aa).

It belongs to the UPF0320 family.

This Saccharomyces cerevisiae (strain ATCC 204508 / S288c) (Baker's yeast) protein is Putative UPF0320 protein YLL065W.